The following is a 131-amino-acid chain: QRFP-like peptide (131 aa).

The N-terminal stretch at 1 to 25 (MGVRVMRSRICVIGLLVLMLTQSEA) is a signal peptide. Residues 26 to 94 (YSFREKSWRT…DDGISPADKR (69 aa)) constitute a propeptide that is removed on maturation. Residues 48-131 (RRDGGDQAPS…RESRRSFGSD (84 aa)) form a disordered region. Positions 97–106 (MLQQLAQQLK) are enriched in polar residues. Phe119 bears the Phenylalanine amide mark. The segment covering 120 to 131 (GKRESRRSFGSD) has biased composition (basic and acidic residues). The propeptide occupies 123 to 131 (ESRRSFGSD).

This sequence belongs to the RFamide neuropeptide family.

The protein resides in the secreted. Ligand for the G-protein coupled receptor QRFPR. The protein is QRFP-like peptide of Branchiostoma floridae (Florida lancelet).